The following is a 290-amino-acid chain: Acetyl-coenzyme A carboxylase carboxyl transferase subunit beta (290 aa).

In terms of domain architecture, CoA carboxyltransferase N-terminal spans 27–290 (LWVKCPSCEA…LQRQPADALA (264 aa)). Residues Cys-31, Cys-34, Cys-50, and Cys-53 each contribute to the Zn(2+) site. The C4-type zinc finger occupies 31–53 (CPSCEAVLYRNDVDANLHVCPKC).

Belongs to the AccD/PCCB family. Acetyl-CoA carboxylase is a heterohexamer composed of biotin carboxyl carrier protein (AccB), biotin carboxylase (AccC) and two subunits each of ACCase subunit alpha (AccA) and ACCase subunit beta (AccD). Zn(2+) is required as a cofactor.

The protein localises to the cytoplasm. It carries out the reaction N(6)-carboxybiotinyl-L-lysyl-[protein] + acetyl-CoA = N(6)-biotinyl-L-lysyl-[protein] + malonyl-CoA. It participates in lipid metabolism; malonyl-CoA biosynthesis; malonyl-CoA from acetyl-CoA: step 1/1. In terms of biological role, component of the acetyl coenzyme A carboxylase (ACC) complex. Biotin carboxylase (BC) catalyzes the carboxylation of biotin on its carrier protein (BCCP) and then the CO(2) group is transferred by the transcarboxylase to acetyl-CoA to form malonyl-CoA. The polypeptide is Acetyl-coenzyme A carboxylase carboxyl transferase subunit beta (Burkholderia multivorans (strain ATCC 17616 / 249)).